The sequence spans 353 residues: Photosystem II D2 protein (353 aa).

Residue threonine 2 is modified to N-acetylthreonine. At threonine 2 the chain carries Phosphothreonine. Residues 41–61 (CAYFAVGGWFTGTTFVTSWYT) traverse the membrane as a helical segment. Histidine 118 lines the chlorophyll a pocket. The chain crosses the membrane as a helical span at residues 125–141 (GFMLRQFELARSVQLRP). The pheophytin a site is built by glutamine 130 and asparagine 143. The chain crosses the membrane as a helical span at residues 153 to 166 (VFVSVFLIYPLGQS). Chlorophyll a is bound at residue histidine 198. A helical membrane pass occupies residues 208 to 228 (AALLCAIHGATVENTLFEDGD). Residues histidine 215 and phenylalanine 262 each coordinate a plastoquinone. Residue histidine 215 coordinates Fe cation. Histidine 269 provides a ligand contact to Fe cation. Residues 279-295 (GLWMSALGVVGLALNLR) form a helical membrane-spanning segment.

This sequence belongs to the reaction center PufL/M/PsbA/D family. In terms of assembly, PSII is composed of 1 copy each of membrane proteins PsbA, PsbB, PsbC, PsbD, PsbE, PsbF, PsbH, PsbI, PsbJ, PsbK, PsbL, PsbM, PsbT, PsbX, PsbY, PsbZ, Psb30/Ycf12, at least 3 peripheral proteins of the oxygen-evolving complex and a large number of cofactors. It forms dimeric complexes. The D1/D2 heterodimer binds P680, chlorophylls that are the primary electron donor of PSII, and subsequent electron acceptors. It shares a non-heme iron and each subunit binds pheophytin, quinone, additional chlorophylls, carotenoids and lipids. There is also a Cl(-1) ion associated with D1 and D2, which is required for oxygen evolution. The PSII complex binds additional chlorophylls, carotenoids and specific lipids. is required as a cofactor.

The protein localises to the plastid. The protein resides in the chloroplast thylakoid membrane. It catalyses the reaction 2 a plastoquinone + 4 hnu + 2 H2O = 2 a plastoquinol + O2. Functionally, photosystem II (PSII) is a light-driven water:plastoquinone oxidoreductase that uses light energy to abstract electrons from H(2)O, generating O(2) and a proton gradient subsequently used for ATP formation. It consists of a core antenna complex that captures photons, and an electron transfer chain that converts photonic excitation into a charge separation. The D1/D2 (PsbA/PsbD) reaction center heterodimer binds P680, the primary electron donor of PSII as well as several subsequent electron acceptors. D2 is needed for assembly of a stable PSII complex. This chain is Photosystem II D2 protein, found in Cucumis sativus (Cucumber).